Here is a 92-residue protein sequence, read N- to C-terminus: C-C motif chemokine 3 (92 aa).

The signal sequence occupies residues 1-23 (MKVSTTALAVLLCTMTLCNQVFS). 2 disulfide bridges follow: C34–C57 and C35–C73.

The protein belongs to the intercrine beta (chemokine CC) family. As to quaternary structure, self-associates. Also heterodimer of MIP-1-alpha(4-69) and MIP-1-beta(3-69). Interacts with CCR1. In terms of tissue distribution, expressed in lung, spleen, and pancreas.

It is found in the secreted. Its function is as follows. Monokine with inflammatory and chemokinetic properties. Binds to CCR1, CCR4 and CCR5. One of the major HIV-suppressive factors produced by CD8+ T-cells. Recombinant MIP-1-alpha induces a dose-dependent inhibition of different strains of HIV-1, HIV-2, and simian immunodeficiency virus (SIV). The sequence is that of C-C motif chemokine 3 (Ccl3) from Mus musculus (Mouse).